A 171-amino-acid chain; its full sequence is ATP synthase subunit b (171 aa).

The chain crosses the membrane as a helical span at residues 2-22 (FVVKMVLGFLILLSPLCATGL).

The protein belongs to the ATPase B chain family. As to quaternary structure, F-type ATPases have 2 components, F(1) - the catalytic core - and F(0) - the membrane proton channel. F(1) has five subunits: alpha(3), beta(3), gamma(1), delta(1), epsilon(1). F(0) has three main subunits: a(1), b(2) and c(10-14). The alpha and beta chains form an alternating ring which encloses part of the gamma chain. F(1) is attached to F(0) by a central stalk formed by the gamma and epsilon chains, while a peripheral stalk is formed by the delta and b chains.

The protein resides in the cell inner membrane. Its function is as follows. F(1)F(0) ATP synthase produces ATP from ADP in the presence of a proton or sodium gradient. F-type ATPases consist of two structural domains, F(1) containing the extramembraneous catalytic core and F(0) containing the membrane proton channel, linked together by a central stalk and a peripheral stalk. During catalysis, ATP synthesis in the catalytic domain of F(1) is coupled via a rotary mechanism of the central stalk subunits to proton translocation. In terms of biological role, component of the F(0) channel, it forms part of the peripheral stalk, linking F(1) to F(0). The chain is ATP synthase subunit b from Helicobacter pylori (strain J99 / ATCC 700824) (Campylobacter pylori J99).